Reading from the N-terminus, the 325-residue chain is DNA-directed RNA polymerase subunit alpha (325 aa).

The tract at residues 1-239 (MQQFLRYNIN…DHLKPLIDIN (239 aa)) is alpha N-terminal domain (alpha-NTD). The tract at residues 255-325 (EKNKKLSIPI…ELYDLKLKNN (71 aa)) is alpha C-terminal domain (alpha-CTD).

This sequence belongs to the RNA polymerase alpha chain family. As to quaternary structure, homodimer. The RNAP catalytic core consists of 2 alpha, 1 beta, 1 beta' and 1 omega subunit. When a sigma factor is associated with the core the holoenzyme is formed, which can initiate transcription.

It carries out the reaction RNA(n) + a ribonucleoside 5'-triphosphate = RNA(n+1) + diphosphate. DNA-dependent RNA polymerase catalyzes the transcription of DNA into RNA using the four ribonucleoside triphosphates as substrates. The polypeptide is DNA-directed RNA polymerase subunit alpha (Mycoplasmoides gallisepticum (strain R(low / passage 15 / clone 2)) (Mycoplasma gallisepticum)).